The following is a 309-amino-acid chain: Enoyl-CoA hydratase 2, peroxisomal (309 aa).

Substrate-binding positions include 95–96, lysine 124, 208–213, glycine 231, and phenylalanine 261; these read HG and DYNPLH. Residues 183-295 enclose the MaoC-like domain; sequence PQRQPLTVCE…TKVKERNKTV (113 aa). The short motif at 307–309 is the Microbody targeting signal element; the sequence is SSL.

In terms of tissue distribution, ubiquitous.

The protein resides in the peroxisome. It catalyses the reaction a (3R)-3-hydroxyacyl-CoA = a (2E)-enoyl-CoA + H2O. It participates in lipid metabolism; fatty acid beta-oxidation. In terms of biological role, bidirectional monofunctional enoyl-CoA hydratase 2 involved in the degradation of even cis-unsaturated fatty acids. Devoid of 3-hydroxyacyl-CoA dehydrogenase activity. This chain is Enoyl-CoA hydratase 2, peroxisomal (ECH2), found in Arabidopsis thaliana (Mouse-ear cress).